The following is a 228-amino-acid chain: MSSSGNPSSSSGGGGGPCGACKFLRRKCVAGCIFAPYFDSEQGAAHFAAVHKVFGASNVSKLLHHVPEHKRPDAVVSICFEAQARLRDPIYGCVSHIVSLQQQVVSLQTELSYLQAHLATLELPQPQPPQVPVSSSGSLQALSITDLPTISPSVYDLSSIFEPVMSSTWAMQQQPRPSDHLFGVPSSSNMGGGGELQALAREFIHGGQMPAQPSPGTSGSASSVIKRE.

In terms of domain architecture, LOB spans 16 to 118 (GPCGACKFLR…TELSYLQAHL (103 aa)). The segment at 188-228 (SNMGGGGELQALAREFIHGGQMPAQPSPGTSGSASSVIKRE) is disordered. The segment covering 214–228 (SPGTSGSASSVIKRE) has biased composition (polar residues).

This sequence belongs to the LOB domain-containing protein family. As to expression, expressed in roots, stems, leaves and flowers. Expressed in vascular tissues of hypocotyls, leaves, roots, developing floral organs and siliques.

Functionally, involved in the positive regulation of tracheary element (TE) differentiation. Involved in a positive feedback loop that maintains or promotes NAC030/VND7 expression that regulates TE differentiation-related genes. The protein is LOB domain-containing protein 30 (LBD30) of Arabidopsis thaliana (Mouse-ear cress).